The chain runs to 316 residues: Protein lifeguard 2 (316 aa).

Positions 1–53 (MTQGKLSVANKAPGTEGQQQVHGEKKEAPAVPSAPPSYEEATSGEGMKAGAFP) are disordered. Transmembrane regions (helical) follow at residues 106–126 (VYTILLIQLLVTLAVVALFTF), 138–158 (PGWYWASYAVFFATYLTLACC), and 165–185 (FPWNLILLTVFTLSMAYLTGM). Asn191 carries N-linked (GlcNAc...) asparagine glycosylation. A run of 4 helical transmembrane segments spans residues 194 to 214 (SVLLCLGITALVCLSVTVFSF), 225 to 245 (GVLFVLPMTLFFSGLILAILL), 250 to 270 (VPWLHAVYAALGAGVFTLFLA), and 290 to 310 (IFGALNIYLDIIYIFTFFLQL).

Belongs to the BI1 family. LFG subfamily. Interacts with FAS/TNFRSF6 and BAX.

It is found in the cell membrane. It localises to the membrane raft. The protein resides in the postsynaptic cell membrane. In terms of biological role, antiapoptotic protein which protects cells uniquely from Fas-induced apoptosis. Regulates Fas-mediated apoptosis in neurons by interfering with caspase-8 activation. Plays a role in cerebellar development by affecting cerebellar size, internal granular layer (IGL) thickness, and Purkinje cell (PC) development. This is Protein lifeguard 2 (FAIM2) from Pongo abelii (Sumatran orangutan).